We begin with the raw amino-acid sequence, 154 residues long: D-aminoacyl-tRNA deacylase (154 aa).

A Gly-cisPro motif, important for rejection of L-amino acids motif is present at residues 142–143 (GP).

This sequence belongs to the DTD family. Homodimer.

It localises to the cytoplasm. The enzyme catalyses glycyl-tRNA(Ala) + H2O = tRNA(Ala) + glycine + H(+). It carries out the reaction a D-aminoacyl-tRNA + H2O = a tRNA + a D-alpha-amino acid + H(+). Functionally, an aminoacyl-tRNA editing enzyme that deacylates mischarged D-aminoacyl-tRNAs. Also deacylates mischarged glycyl-tRNA(Ala), protecting cells against glycine mischarging by AlaRS. Acts via tRNA-based rather than protein-based catalysis; rejects L-amino acids rather than detecting D-amino acids in the active site. By recycling D-aminoacyl-tRNA to D-amino acids and free tRNA molecules, this enzyme counteracts the toxicity associated with the formation of D-aminoacyl-tRNA entities in vivo and helps enforce protein L-homochirality. The polypeptide is D-aminoacyl-tRNA deacylase (Polaromonas naphthalenivorans (strain CJ2)).